Consider the following 287-residue polypeptide: MRQIAFYGKGGIGKSTTQQNTMAAMAEMGKKVMIVGCDPKADSTRLILHSKAQTSVIQLAAEKGSVEDLELDEVLVEGQWGIKCVESGGPEPGVGCAGRGVITSISYLEEAGAYEDLDFVTYDVLGDVVCGGFAMPIRQGKAQEIYIVTSGEMMAMYAANNIARGILKYAHSGGVRLGGLICNSRNTDREDELIIELARRLNTQMIHFIPRNNVVQHAELRRMTVIEYDPKNEQADQYRQLAKKIVDNDMKTIPTPITMDELEELLIEFGIMEQEDESIIGKAAAVA.

Residue 8-15 (GKGGIGKS) participates in ATP binding. Residue Cys-96 coordinates [4Fe-4S] cluster. Arg-99 is subject to ADP-ribosylarginine; by dinitrogenase reductase ADP-ribosyltransferase. Cys-130 contacts [4Fe-4S] cluster.

This sequence belongs to the NifH/BchL/ChlL family. As to quaternary structure, homodimer. [4Fe-4S] cluster is required as a cofactor. In terms of processing, the reversible ADP-ribosylation of Arg-99 inactivates the nitrogenase reductase and regulates nitrogenase activity.

It catalyses the reaction N2 + 8 reduced [2Fe-2S]-[ferredoxin] + 16 ATP + 16 H2O = H2 + 8 oxidized [2Fe-2S]-[ferredoxin] + 2 NH4(+) + 16 ADP + 16 phosphate + 6 H(+). Functionally, the key enzymatic reactions in nitrogen fixation are catalyzed by the nitrogenase complex, which has 2 components: the iron protein and the molybdenum-iron protein. This Frankia casuarinae (strain DSM 45818 / CECT 9043 / HFP020203 / CcI3) protein is Nitrogenase iron protein.